We begin with the raw amino-acid sequence, 200 residues long: Small ribosomal subunit protein uS4 (200 aa).

The tract at residues 22-42 (TGKELEKRPYAPGPHGPGQRK) is disordered. Residues 92 to 155 (TRLDNLVYRL…QNLAVVKESV (64 aa)) enclose the S4 RNA-binding domain.

This sequence belongs to the universal ribosomal protein uS4 family. Part of the 30S ribosomal subunit. Contacts protein S5. The interaction surface between S4 and S5 is involved in control of translational fidelity.

Functionally, one of the primary rRNA binding proteins, it binds directly to 16S rRNA where it nucleates assembly of the body of the 30S subunit. Its function is as follows. With S5 and S12 plays an important role in translational accuracy. This is Small ribosomal subunit protein uS4 from Bacillus pumilus (strain SAFR-032).